The primary structure comprises 530 residues: Cytochrome P450 monooxygenase ausG (530 aa).

The chain crosses the membrane as a helical span at residues 31 to 51; that stretch reads LLVAYRLPGLLLLFSITIILF. Residue C470 participates in heme binding.

It belongs to the cytochrome P450 family. It depends on heme as a cofactor.

It localises to the membrane. It functions in the pathway secondary metabolite biosynthesis; terpenoid biosynthesis. In terms of biological role, cytochrome P450 monooxygenase; part of the gene cluster B that mediates the biosynthesis of the fungal meroterpenoid acetoxydehydroaustin. The first step of the pathway is the synthesis of 3,5-dimethylorsellinic acid by the polyketide synthase ausA. 3,5-dimethylorsellinic acid is then prenylated by the polyprenyl transferase ausN. Further epoxidation by the FAD-dependent monooxygenase ausM and cyclization by the probable terpene cyclase ausL lead to the formation of protoaustinoid A. Protoaustinoid A is then oxidized to spiro-lactone preaustinoid A3 by the combined action of the FAD-binding monooxygenases ausB and ausC, and the dioxygenase ausE. Acid-catalyzed keto-rearrangement and ring contraction of the tetraketide portion of preaustinoid A3 by ausJ lead to the formation of preaustinoid A4. The aldo-keto reductase ausK, with the help of ausH, is involved in the next step by transforming preaustinoid A4 into isoaustinone which is in turn hydroxylated by the P450 monooxygenase ausI to form austinolide. The cytochrome P450 monooxygenase ausG then modifies austinolide to austinol. Austinol is further acetylated to austin by the O-acetyltransferase ausP, which spontaneously changes to dehydroaustin. The cytochrome P450 monooxygenase then converts dehydroaustin is into 7-dehydrodehydroaustin. The hydroxylation catalyzed by ausR permits the second O-acetyltransferase ausQ to add an additional acetyl group to the molecule, leading to the formation of acetoxydehydroaustin. Due to genetic rearrangements of the clusters and the subsequent loss of some enzymes, the end product of the Penicillium brasilianum austinoid biosynthesis clusters is acetoxydehydroaustin. This is Cytochrome P450 monooxygenase ausG from Penicillium brasilianum.